Here is a 462-residue protein sequence, read N- to C-terminus: Runt-related transcription factor 1 (462 aa).

Residues 1–27 (MRIPVDTSTSRRFTPPSTTLSPGKMSE) form a disordered region. Residues 7–22 (TSTSRRFTPPSTTLSP) are compositionally biased toward low complexity. In terms of domain architecture, Runt spans 50 to 178 (NMVEVLSDHP…TVDGPREPRR (129 aa)). An interaction with DNA region spans residues 80–84 (RCNKT). 4 residues coordinate chloride: Asn-112, Glu-116, Arg-139, and Val-170. Interaction with DNA stretches follow at residues 135–143 (RFVGRSGRG) and 168–177 (ITVDGPREPR). A disordered region spans residues 399-462 (MMSGGERSPP…RLEEAVWRPY (64 aa)). 2 stretches are compositionally biased toward polar residues: residues 415-433 (TNASTGSTLLNPNLPNQSD) and 440-450 (SHSNSPTNMGS). A compositionally biased stretch (basic and acidic residues) spans 453 to 462 (RLEEAVWRPY).

In terms of assembly, heterodimer with cbfb. runx1 binds DNA as a monomer and through the Runt domain. DNA-binding is increased by heterodimerization. In terms of tissue distribution, shows a complex and dynamic expression pattern. In stage 14-24 embryos, expressed in a subset of neuroblasts in the lateral stripe of the neural plate. In late neurula stages, expression begins in the olfactory placodes. Also expressed in structures that play a role in blood formation: at stage 14, expressed on the anterior ventral side of the embryo in the anterior endomesoderm. As the embryo elongates, expression shifts gradually to a V-shaped expression pattern in the presumptive ventral blood island.

It is found in the nucleus. Involved in primitive hematopoiesis in the embryo. The protein is Runt-related transcription factor 1 of Xenopus laevis (African clawed frog).